The primary structure comprises 133 residues: Fluoride-specific ion channel FluC 3 (133 aa).

The next 3 helical transmembrane spans lie at isoleucine 7–valine 27, tryptophan 37–glycine 57, and leucine 60–glycine 80. The Na(+) site is built by glycine 79 and threonine 82. The helical transmembrane segment at isoleucine 107 to tryptophan 127 threads the bilayer.

The protein belongs to the fluoride channel Fluc/FEX (TC 1.A.43) family.

The protein resides in the cell inner membrane. It catalyses the reaction fluoride(in) = fluoride(out). Na(+) is not transported, but it plays an essential structural role and its presence is essential for fluoride channel function. Functionally, fluoride-specific ion channel. Important for reducing fluoride concentration in the cell, thus reducing its toxicity. In Brucella suis biovar 1 (strain 1330), this protein is Fluoride-specific ion channel FluC 3.